A 424-amino-acid polypeptide reads, in one-letter code: MPSNSTPANEEKEEESEKIQKSPVDTPHTPNGSVSDNEENETSSTGEVTRCVCGIVESDDEASDGGLYIQCDQCSVWQHGNCVGFADESEVPEVYYCEICHPEFHKVYQRGRGAKQSKYLGNGKPIEASQTEESSSTPPSPATKKSSKQRLTMNSRDAALDYEEYLAIAKEKSLIPRRSRGRTSSKSLSPPAPQDESQGTEINLKQKIEEENDEILEDSKESKDENEENKETSTTNVAETDAPEEETVDTVEEIADEEKHSVKEESGEASPQSSQQSTITSISTTTRSTRKAKREAAAEDKADLPAAVAPKPSKTRKVGGRRGKSSSNDNHRIPQLHPDGTFVETITKPKGLHSRITMTEMRRRVASMLEYIGHIQVEMAAQSAGNQSSTKSSKEGPEEEKETLRMVDNLTRDLLHWEQRFSRT.

Disordered stretches follow at residues 1–49, 117–155, 170–341, and 381–405; these read MPSN…GEVT, SKYL…TMNS, KEKS…PDGT, and AQSA…ETLR. The PHD-type zinc-finger motif lies at 48–103; that stretch reads VTRCVCGIVESDDEASDGGLYIQCDQCSVWQHGNCVGFADESEVPEVYYCEICHPE. Over residues 127–137 the composition is skewed to low complexity; the sequence is EASQTEESSST. Serine 187 carries the phosphoserine modification. The span at 241-256 shows a compositional bias: acidic residues; that stretch reads DAPEEETVDTVEEIAD. Residues 257-266 are compositionally biased toward basic and acidic residues; that stretch reads EEKHSVKEES. Positions 272-287 are enriched in low complexity; that stretch reads QSSQQSTITSISTTTR. The span at 294–303 shows a compositional bias: basic and acidic residues; it reads REAAAEDKAD. The span at 313 to 324 shows a compositional bias: basic residues; the sequence is SKTRKVGGRRGK. The span at 392-405 shows a compositional bias: basic and acidic residues; that stretch reads SSKEGPEEEKETLR.

Its subcellular location is the cytoplasm. The protein resides in the nucleus. Could be a component of the RPD3C(L) histone deacetylase complex (HDAC). This chain is Putative histone deacetylase complex subunit cti6 (cti6), found in Schizosaccharomyces pombe (strain 972 / ATCC 24843) (Fission yeast).